Reading from the N-terminus, the 243-residue chain is Ribonuclease PH (243 aa).

Residues Arg-91 and 129–131 (GTR) each bind phosphate.

It belongs to the RNase PH family. Homohexameric ring arranged as a trimer of dimers.

It carries out the reaction tRNA(n+1) + phosphate = tRNA(n) + a ribonucleoside 5'-diphosphate. Phosphorolytic 3'-5' exoribonuclease that plays an important role in tRNA 3'-end maturation. Removes nucleotide residues following the 3'-CCA terminus of tRNAs; can also add nucleotides to the ends of RNA molecules by using nucleoside diphosphates as substrates, but this may not be physiologically important. Probably plays a role in initiation of 16S rRNA degradation (leading to ribosome degradation) during starvation. In Burkholderia pseudomallei (strain 668), this protein is Ribonuclease PH.